Reading from the N-terminus, the 216-residue chain is MGQKVNPLGFRLRITSQHRSSWFATKESYPQLLEQDFKIRSYINRELEAAGISKIEISRNANQLEVSVYTSRPGIIVGRSGLGIEKIKTDILRLLKQDISIRINVIELTNPDADANLIGEFIAQQLEKRVAFRRATRQAIQKAQRANVQGIKVQVSGRLNGAEIARSEWVREGRVPLQTLRANIDYATKEAHTTYGILGIKVWVFNGEQTPTYAVI.

In terms of domain architecture, KH type-2 spans 39–109 (IRSYINRELE…SIRINVIELT (71 aa)).

Belongs to the universal ribosomal protein uS3 family. In terms of assembly, part of the 30S ribosomal subunit.

Its subcellular location is the plastid. The protein localises to the chloroplast. In Guillardia theta (Cryptophyte), this protein is Small ribosomal subunit protein uS3c (rps3).